Here is a 403-residue protein sequence, read N- to C-terminus: 3-(3-hydroxy-phenyl)propionate transporter (403 aa).

At 1 to 16 (MSTRTPSSSSSRLMLT) the chain is on the cytoplasmic side. The helical transmembrane segment at 17–37 (IGLCFLVALMEGLDLQAAGIA) threads the bilayer. At 38 to 53 (AGGIAQAFALDKMQMG) the chain is on the periplasmic side. The chain crosses the membrane as a helical span at residues 54 to 74 (WIFSAGILGLLPGALVGGMLA). Topologically, residues 75-81 (DRYGRKR) are cytoplasmic. The helical transmembrane segment at 82 to 102 (ILIGSVALFGLFSLATAIAWD) threads the bilayer. Topologically, residues 103–105 (FPS) are periplasmic. The chain crosses the membrane as a helical span at residues 106 to 126 (LVFARLMTGVGLGAALPNLIA). The Cytoplasmic portion of the chain corresponds to 127 to 142 (LTSEAAGPRFRGTAVS). A helical transmembrane segment spans residues 143–163 (LMYCGVPIGAALAATLGFAGA). Asn164 is a topological domain (periplasmic). The chain crosses the membrane as a helical span at residues 165–185 (LAWQTVFWVGGVVPLILVPLL). Residues 186-217 (MRWLPESAVFAGEKQSAPPLRALFAPETATAT) are Cytoplasmic-facing. Residues 218–238 (LLLWLCYFFTLLVVYMLINWL) form a helical membrane-spanning segment. The Periplasmic segment spans residues 239–253 (PLLLVEQGFQPSQAA). Residues 254–274 (GVMFALQMGAASGTLMLGALM) form a helical membrane-spanning segment. The Cytoplasmic portion of the chain corresponds to 275–279 (DKLRP). A helical transmembrane segment spans residues 280–300 (VTMSLLIYSGMLASLLALGTV). Residues 301–306 (SSFNGM) are Periplasmic-facing. A helical membrane pass occupies residues 307–327 (LLAGFVAGLFATGGQSVLYAL). The Cytoplasmic portion of the chain corresponds to 328–339 (APLFYSSQIRAT). The helical transmembrane segment at 340 to 360 (GVGTAVAVGRLGAMSGPLLAG) threads the bilayer. Residues 361–369 (KMLALGTGT) lie on the Periplasmic side of the membrane. A helical transmembrane segment spans residues 370 to 390 (VGVMAASAPGILVAGLAVFIL). The Cytoplasmic segment spans residues 391–403 (MSRRSRIQPCADA).

Belongs to the major facilitator superfamily. Aromatic acid:H(+) symporter (AAHS) (TC 2.A.1.15) family.

The protein resides in the cell inner membrane. It carries out the reaction 3-(3-hydroxyphenyl)propanoate(in) + H(+)(in) = 3-(3-hydroxyphenyl)propanoate(out) + H(+)(out). Inhibited by carbonyl cyanide m-chlorophenylhydrazone (CCCP), which dissipates the proton motive force. In terms of biological role, uptake of 3-(3-hydroxyphenyl)propionate (3HPP) across the cytoplasmic membrane. Transport is driven by the proton motive force. Does not transport benzoate, 3-hydroxybenzoate or gentisate. This chain is 3-(3-hydroxy-phenyl)propionate transporter, found in Escherichia coli (strain K12).